The primary structure comprises 1219 residues: Pleckstrin homology domain-containing family G member 3 (1219 aa).

Residues methionine 1 to aspartate 10 show a composition bias toward polar residues. The tract at residues methionine 1–serine 66 is disordered. Low complexity predominate over residues serine 18 to alanine 46. At serine 76 the chain carries Phosphoserine. The DH domain maps to tyrosine 93–methionine 272. One can recognise a PH domain in the interval aspartate 296–leucine 394. A compositionally biased stretch (polar residues) spans tryptophan 431–arginine 442. Disordered regions lie at residues tryptophan 431–leucine 599 and phenylalanine 613–alanine 708. Serine 433 carries the post-translational modification Phosphoserine. A compositionally biased stretch (basic and acidic residues) spans arginine 446 to arginine 463. Residues serine 576, serine 577, serine 618, serine 631, serine 640, serine 643, and serine 647 each carry the phosphoserine modification. Low complexity predominate over residues glycine 630–glutamate 645. The segment covering glutamate 696–alanine 708 has biased composition (basic and acidic residues). Phosphoserine occurs at positions 741, 779, and 827. Disordered stretches follow at residues arginine 756–arginine 780, methionine 821–phenylalanine 840, glutamate 859–alanine 878, alanine 955–threonine 1133, and valine 1146–asparagine 1207. Over residues glycine 826–glutamine 836 the composition is skewed to gly residues. The span at glutamate 859–glutamate 873 shows a compositional bias: low complexity. 5 positions are modified to phosphoserine: serine 962, serine 1011, serine 1023, serine 1037, and serine 1040. Positions serine 1020–proline 1029 are enriched in polar residues. Over residues aspartate 1049–arginine 1065 the composition is skewed to basic and acidic residues. Serine 1081 bears the Phosphoserine mark. The residue at position 1107 (arginine 1107) is an Omega-N-methylarginine. The span at glutamine 1187–alanine 1197 shows a compositional bias: basic and acidic residues.

The protein localises to the cytoplasm. It localises to the cytoskeleton. Functionally, plays a role in controlling cell polarity and cell motility by selectively binding newly polymerized actin and activating RAC1 and CDC42 to enhance local actin polymerization. In Homo sapiens (Human), this protein is Pleckstrin homology domain-containing family G member 3.